Consider the following 227-residue polypeptide: Protein PhlB (227 aa).

The first 35 residues, 1–35 (MPEGRRLRRALAIALLALVAVTGLLMMAKEQQMGQ), serve as a signal peptide directing secretion. ANK repeat units follow at residues 75–104 (RQVT…DPAA), 108–137 (DGNS…QMNV), 142–171 (TGAT…DTTL), and 175–204 (LGDT…MPGR).

Cell-protective protein that neutralizes the intracellular lysis capacity of phospholipase A1 through a direct interaction with the enzyme. This is Protein PhlB (phlB) from Serratia liquefaciens.